Here is a 382-residue protein sequence, read N- to C-terminus: Na(+)/H(+) antiporter NhaA 2 (382 aa).

Transmembrane regions (helical) follow at residues 8 to 28 (FFSSPAAGGIVLIIASAAAII), 49 to 69 (LSVEHWINDALMAVFFMMVGL), 87 to 107 (ALPGFAALGGMAVPAAIYVWF), 115 to 135 (LAGWAIPAATDIAFALGVLAL), 146 to 166 (IFLSALAILDDMGAVAIIALF), 169 to 189 (SNISFLMLAGAAVTVALLFIM), 209 to 229 (FFMLQSGVHATIAGILLALFI), 252 to 272 (WVTFLILPLFGFANAGVALSG), 286 to 306 (VALGLFVGKQAGIFGLSLLAV), 325 to 345 (VSVLCGIGFTMSLFIGNLAFA), and 353 to 373 (EVKVGVLAGSVLAALAGMLIL).

It belongs to the NhaA Na(+)/H(+) (TC 2.A.33) antiporter family.

It is found in the cell inner membrane. The catalysed reaction is Na(+)(in) + 2 H(+)(out) = Na(+)(out) + 2 H(+)(in). Na(+)/H(+) antiporter that extrudes sodium in exchange for external protons. This chain is Na(+)/H(+) antiporter NhaA 2, found in Klebsiella pneumoniae subsp. pneumoniae (strain ATCC 700721 / MGH 78578).